A 343-amino-acid polypeptide reads, in one-letter code: Protein RecA (343 aa).

Residue 66–73 (GPESSGKT) coordinates ATP.

Belongs to the RecA family.

Its subcellular location is the cytoplasm. In terms of biological role, can catalyze the hydrolysis of ATP in the presence of single-stranded DNA, the ATP-dependent uptake of single-stranded DNA by duplex DNA, and the ATP-dependent hybridization of homologous single-stranded DNAs. It interacts with LexA causing its activation and leading to its autocatalytic cleavage. The chain is Protein RecA from Rickettsia africae (strain ESF-5).